Here is a 772-residue protein sequence, read N- to C-terminus: NAD(P)H-quinone oxidoreductase subunit 5, chloroplastic (772 aa).

16 helical membrane-spanning segments follow: residues Trp-9–Phe-29, Trp-40–Ile-60, Ile-89–Phe-109, Phe-125–Ile-145, Ile-147–Thr-167, Gly-185–Phe-205, Asn-220–Ala-240, Thr-259–Ala-279, Tyr-290–Ala-312, Leu-328–Ile-348, Ala-355–Ser-375, Thr-397–Ser-417, Trp-426–Tyr-446, Leu-550–Phe-570, Phe-604–Phe-624, and Ile-731–Leu-751.

Belongs to the complex I subunit 5 family. NDH is composed of at least 16 different subunits, 5 of which are encoded in the nucleus.

The protein localises to the plastid. It localises to the chloroplast thylakoid membrane. The enzyme catalyses a plastoquinone + NADH + (n+1) H(+)(in) = a plastoquinol + NAD(+) + n H(+)(out). The catalysed reaction is a plastoquinone + NADPH + (n+1) H(+)(in) = a plastoquinol + NADP(+) + n H(+)(out). Functionally, NDH shuttles electrons from NAD(P)H:plastoquinone, via FMN and iron-sulfur (Fe-S) centers, to quinones in the photosynthetic chain and possibly in a chloroplast respiratory chain. The immediate electron acceptor for the enzyme in this species is believed to be plastoquinone. Couples the redox reaction to proton translocation, and thus conserves the redox energy in a proton gradient. This chain is NAD(P)H-quinone oxidoreductase subunit 5, chloroplastic (ndhF), found in Oenothera argillicola (Appalachian evening primrose).